Reading from the N-terminus, the 98-residue chain is UPF0473 protein lp_2273 (98 aa).

Belongs to the UPF0473 family.

This chain is UPF0473 protein lp_2273, found in Lactiplantibacillus plantarum (strain ATCC BAA-793 / NCIMB 8826 / WCFS1) (Lactobacillus plantarum).